Consider the following 325-residue polypeptide: CRISPR-associated endonuclease Cas1 3 (325 aa).

Residues E152, H217, and E232 each contribute to the Mn(2+) site.

It belongs to the CRISPR-associated endonuclease Cas1 family. Homodimer, forms a heterotetramer with a Cas2 homodimer. The cofactor is Mg(2+). It depends on Mn(2+) as a cofactor.

Functionally, CRISPR (clustered regularly interspaced short palindromic repeat), is an adaptive immune system that provides protection against mobile genetic elements (viruses, transposable elements and conjugative plasmids). CRISPR clusters contain spacers, sequences complementary to antecedent mobile elements, and target invading nucleic acids. CRISPR clusters are transcribed and processed into CRISPR RNA (crRNA). Acts as a dsDNA endonuclease. Involved in the integration of spacer DNA into the CRISPR cassette. This Thermodesulfovibrio yellowstonii (strain ATCC 51303 / DSM 11347 / YP87) protein is CRISPR-associated endonuclease Cas1 3.